Here is a 412-residue protein sequence, read N- to C-terminus: L-threonine:uridine-5'-aldehyde transaldolase (412 aa).

Lys-229 is modified (N6-(pyridoxal phosphate)lysine).

It belongs to the SHMT family. It depends on pyridoxal 5'-phosphate as a cofactor.

The catalysed reaction is uridine-5'-aldehyde + L-threonine = (5'S,6'S)-C-glycyluridine + acetaldehyde. Its pathway is antibiotic biosynthesis. In terms of biological role, transaldolase involved in the biosynthesis of the capuramycin-type nucleoside antibiotic A-503083. Catalyzes the condensation of L-threonine and uridine-5'-aldehyde to form 5'-C-glycyluridine (GlyU). Forms (5'S,6'S)-GlyU. This chain is L-threonine:uridine-5'-aldehyde transaldolase, found in Streptomyces sp.